The sequence spans 192 residues: Pyridoxal 5'-phosphate synthase subunit PdxT (192 aa).

Residue 47 to 49 coordinates L-glutamine; sequence GES. Residue C79 is the Nucleophile of the active site. L-glutamine is bound by residues R106 and 134-135; that span reads IR. Active-site charge relay system residues include H170 and E172.

The protein belongs to the glutaminase PdxT/SNO family. As to quaternary structure, in the presence of PdxS, forms a dodecamer of heterodimers. Only shows activity in the heterodimer.

The enzyme catalyses aldehydo-D-ribose 5-phosphate + D-glyceraldehyde 3-phosphate + L-glutamine = pyridoxal 5'-phosphate + L-glutamate + phosphate + 3 H2O + H(+). It catalyses the reaction L-glutamine + H2O = L-glutamate + NH4(+). The protein operates within cofactor biosynthesis; pyridoxal 5'-phosphate biosynthesis. Its function is as follows. Catalyzes the hydrolysis of glutamine to glutamate and ammonia as part of the biosynthesis of pyridoxal 5'-phosphate. The resulting ammonia molecule is channeled to the active site of PdxS. The polypeptide is Pyridoxal 5'-phosphate synthase subunit PdxT (Anoxybacillus flavithermus (strain DSM 21510 / WK1)).